The following is a 368-amino-acid chain: UDP-galactose/UDP-N-acetylglucosamine transporter srf-3 (368 aa).

8 helical membrane-spanning segments follow: residues 72-92 (FVST…CLFL), 118-138 (LKVC…YVAA), 145-165 (TFMI…VIIL), 174-194 (WFAL…GTKA), 203-223 (FVGF…GIYF), 235-254 (LWMR…FSAI), 273-293 (SIVW…AVCI), and 317-337 (IFLF…LVIF).

It belongs to the nucleotide-sugar transporter family. SLC35A subfamily. As to expression, expressed exclusively in pharyngeal cells g1 and g2, lateral seam cells, spermatheca and vas deferens.

It is found in the golgi apparatus membrane. Acts as a transporter of both UDP-galactose and UDP-N-acetylglucosamine into the Golgi lumen. Apparently transports UDP-galactose and UDP-N-acetylglucosamine simultaneously, and independently, by an unknown mechanism. Functions redundantly with nucleotide sugar transporter nstp-4. May be involved in gonadal development. The polypeptide is UDP-galactose/UDP-N-acetylglucosamine transporter srf-3 (srf-3) (Caenorhabditis elegans).